Here is a 139-residue protein sequence, read N- to C-terminus: Small ribosomal subunit protein uS12 (139 aa).

Residues 1-21 (MSTVSQLIKKRRSSKTSKTKA) form a disordered region. Over residues 8–18 (IKKRRSSKTSK) the composition is skewed to basic residues.

This sequence belongs to the universal ribosomal protein uS12 family. Part of the 30S ribosomal subunit. Contacts proteins S8 and S17. May interact with IF1 in the 30S initiation complex.

With S4 and S5 plays an important role in translational accuracy. Functionally, interacts with and stabilizes bases of the 16S rRNA that are involved in tRNA selection in the A site and with the mRNA backbone. Located at the interface of the 30S and 50S subunits, it traverses the body of the 30S subunit contacting proteins on the other side and probably holding the rRNA structure together. The combined cluster of proteins S8, S12 and S17 appears to hold together the shoulder and platform of the 30S subunit. In Onion yellows phytoplasma (strain OY-M), this protein is Small ribosomal subunit protein uS12.